The primary structure comprises 416 residues: Counting factor 60 (416 aa).

Positions 1 to 22 (MIKKSALITLFLVSLILGVSLS) are cleaved as a signal peptide. Residues Asn-110, Asn-218, Asn-231, Asn-318, and Asn-411 are each glycosylated (N-linked (GlcNAc...) asparagine).

Belongs to the histidine acid phosphatase family. In terms of assembly, component of the counting factor (CF) complex, which includes cf60, cf50, cf45-1 and ctnA.

The protein localises to the secreted. Functionally, cell-counting factor that limits the maximum size of the multicellular structure. Does not possess acid phosphatase activity. Cells with decreased levels of this protein form large groups while cells overexpressing this protein form small groups. This Dictyostelium discoideum (Social amoeba) protein is Counting factor 60 (cf60).